The following is a 458-amino-acid chain: Bifunctional protein GlmU (458 aa).

A pyrophosphorylase region spans residues 1–232; the sequence is MTSSLSVIIL…TFEIEGVNNR (232 aa). UDP-N-acetyl-alpha-D-glucosamine-binding positions include 10–13, Lys-24, Gln-79, 84–85, 106–108, Gly-142, Glu-157, Asn-172, and Asn-230; these read LAAG, GT, and YGD. Asp-108 is a Mg(2+) binding site. A Mg(2+)-binding site is contributed by Asn-230. Residues 233–253 are linker; the sequence is QQLASLERTWQGKLVADLQEA. Residues 254–458 are N-acetyltransferase; the sequence is GVQFADPTRV…KNDFKRPTKK (205 aa). Residues Arg-336 and Lys-354 each contribute to the UDP-N-acetyl-alpha-D-glucosamine site. The active-site Proton acceptor is His-366. UDP-N-acetyl-alpha-D-glucosamine contacts are provided by Tyr-369 and Asn-380. Acetyl-CoA-binding positions include Ala-383, 389-390, Ser-408, Ala-426, and Arg-443; that span reads NY.

This sequence in the N-terminal section; belongs to the N-acetylglucosamine-1-phosphate uridyltransferase family. In the C-terminal section; belongs to the transferase hexapeptide repeat family. In terms of assembly, homotrimer. Mg(2+) is required as a cofactor.

It is found in the cytoplasm. The catalysed reaction is alpha-D-glucosamine 1-phosphate + acetyl-CoA = N-acetyl-alpha-D-glucosamine 1-phosphate + CoA + H(+). It carries out the reaction N-acetyl-alpha-D-glucosamine 1-phosphate + UTP + H(+) = UDP-N-acetyl-alpha-D-glucosamine + diphosphate. It functions in the pathway nucleotide-sugar biosynthesis; UDP-N-acetyl-alpha-D-glucosamine biosynthesis; N-acetyl-alpha-D-glucosamine 1-phosphate from alpha-D-glucosamine 6-phosphate (route II): step 2/2. The protein operates within nucleotide-sugar biosynthesis; UDP-N-acetyl-alpha-D-glucosamine biosynthesis; UDP-N-acetyl-alpha-D-glucosamine from N-acetyl-alpha-D-glucosamine 1-phosphate: step 1/1. It participates in bacterial outer membrane biogenesis; LPS lipid A biosynthesis. Catalyzes the last two sequential reactions in the de novo biosynthetic pathway for UDP-N-acetylglucosamine (UDP-GlcNAc). The C-terminal domain catalyzes the transfer of acetyl group from acetyl coenzyme A to glucosamine-1-phosphate (GlcN-1-P) to produce N-acetylglucosamine-1-phosphate (GlcNAc-1-P), which is converted into UDP-GlcNAc by the transfer of uridine 5-monophosphate (from uridine 5-triphosphate), a reaction catalyzed by the N-terminal domain. This chain is Bifunctional protein GlmU, found in Psychrobacter cryohalolentis (strain ATCC BAA-1226 / DSM 17306 / VKM B-2378 / K5).